We begin with the raw amino-acid sequence, 967 residues long: E3 ubiquitin-protein ligase arkadia-C (967 aa).

2 disordered regions span residues 57 to 175 (QQID…VSSL) and 193 to 276 (RKRF…SGGM). The segment covering 112 to 131 (SSFSDCISSPSSSSHFGDSD) has biased composition (low complexity). The segment covering 149–160 (GINSTPRTQSAR) has biased composition (polar residues). The segment covering 232-251 (SSSSSSENDLSSESSSSSST) has biased composition (low complexity). The SUMO interaction motif 1 (SIM) motif lies at 280-284 (VVVIE). The SUMO interaction motif 2 (SIM) signature appears at 305-311 (EVEIVTV). The segment at 321 to 343 (LGHPRSHWGQNSQSGRTQEHRTR) is disordered. The short motif at 360 to 364 (VVDLT) is the SUMO interaction motif 3 (SIM) element. Disordered regions lie at residues 368-452 (DDPT…MPRL), 482-548 (HSHH…LSNN), 629-657 (LHHQTSACPHSNPASQPPPPPPPPPMDYV), and 669-689 (PSLTSTHAVPPPPPSHHLSTA). Low complexity predominate over residues 385-395 (VSTVSSNTSTS). Residues 482–498 (HSHHFPHHHHHHHHHSS) are compositionally biased toward basic residues. The segment covering 629 to 642 (LHHQTSACPHSNPA) has biased composition (polar residues). Over residues 643–654 (SQPPPPPPPPPM) the composition is skewed to pro residues. Residues 880 to 882 (YPH) form a ubiquitin binding region. Residues Cys-915 and Cys-918 each coordinate Zn(2+). The RING-type; atypical zinc finger occupies 915-956 (CTICLSILEEGEDVRRLPCMHLFHQVCVDQWLITNKKCPICR). The ubiquitin binding stretch occupies residues 930-934 (RLPCM). Zn(2+)-binding residues include His-938 and Cys-941.

Belongs to the Arkadia family. Monomer.

It is found in the nucleus. Its subcellular location is the cytoplasm. The protein resides in the PML body. It carries out the reaction S-ubiquitinyl-[E2 ubiquitin-conjugating enzyme]-L-cysteine + [acceptor protein]-L-lysine = [E2 ubiquitin-conjugating enzyme]-L-cysteine + N(6)-ubiquitinyl-[acceptor protein]-L-lysine.. It participates in protein modification; protein ubiquitination. Its activity is regulated as follows. Binds free ubiquitin non-covalently via its RING-type zinc finger. Ubiquitin-binding leads to enhance the E3 ubiquitin-protein ligase activity by stabilizing the ubiquitin-conjugating enzyme E2 (donor ubiquitin) in the 'closed' conformation and activating ubiquitin transfer. Its function is as follows. E3 ubiquitin-protein ligase required for mesoderm patterning during embryonic development. Acts as an enhancer of the transcriptional responses of the smad2/smad3 effectors, which are activated downstream of BMP. Acts by mediating ubiquitination and degradation of SMAD inhibitors such as smad7, inducing their proteasomal degradation and thereby enhancing the transcriptional activity of TGF-beta and BMP. Specifically binds polysumoylated chains via SUMO interaction motifs (SIMs) and mediates ubiquitination of sumoylated substrates. The regulation of the BMP-SMAD signaling is however independent of sumoylation and is not dependent of SUMO interaction motifs (SIMs). This chain is E3 ubiquitin-protein ligase arkadia-C (rnf111-c), found in Xenopus laevis (African clawed frog).